Here is an 839-residue protein sequence, read N- to C-terminus: Septin-interacting protein 1 (839 aa).

The interval 22–164 (INRPRGRQSR…ASERNVGAWE (143 aa)) is disordered. Phosphoserine occurs at positions 43 and 47. Thr-53 is modified (phosphothreonine). Over residues 88–101 (LQADDEKGSQKEGA) the composition is skewed to basic and acidic residues. The span at 102-111 (EADQGEESDD) shows a compositional bias: acidic residues. A compositionally biased stretch (polar residues) spans 140-149 (SRKQPSTTFQ). The 47-residue stretch at 167-213 (TRGIGAKLLLQMGYEPGKGLGKDLQGISHPVQAHVRKGRGAIGAYGP) folds into the G-patch domain. Residues 363–411 (IDNQERECSSQQAALESEHRKLEEIVQLERNHIRTLEESLERVERLIDN) adopt a coiled-coil conformation.

It belongs to the TFP11/STIP family. Identified in the spliceosome C complex. Interacts with pnut.

The protein localises to the nucleus. May be involved in pre-mRNA splicing. In Drosophila melanogaster (Fruit fly), this protein is Septin-interacting protein 1 (sip1).